We begin with the raw amino-acid sequence, 325 residues long: MECYEQSRQRAAFVVLLFIVMLGSQAQAQLRTDFYSDSCPSLLPTVRRVVQREVAKERRIAASLLRLFFHDCFVNGCDASILLDDTRSFLGEKTAGPNNNSVRGYEVIDAIKSRVERLCPGVVSCADILAITARDSVLLMGGRGWSVKLGRRDSITASFSTANSGVLPPPTSTLDNLINLFRANGLSPRDMVALSGAHTIGQARCVTFRSRIYNSTNIDLSFALSRRRSCPAATGSGDNNAAILDLRTPEKFDGSYFMQLVNHRGLLTSDQVLFNGGSTDSIVVSYSRSVQAFYRDFVAAMIKMGDISPLTGSNGQIRRSCRRPN.

Residues 1-28 form the signal peptide; that stretch reads MECYEQSRQRAAFVVLLFIVMLGSQAQA. Glutamine 29 bears the Pyrrolidone carboxylic acid mark. 4 disulfide bridges follow: cysteine 39-cysteine 119, cysteine 72-cysteine 77, cysteine 125-cysteine 321, and cysteine 205-cysteine 230. Histidine 70 functions as the Proton acceptor in the catalytic mechanism. Aspartate 71, valine 74, glycine 76, aspartate 78, and serine 80 together coordinate Ca(2+). Residue asparagine 99 is glycosylated (N-linked (GlcNAc...) asparagine). Proline 168 is a substrate binding site. Residue histidine 198 coordinates heme b. Residue threonine 199 participates in Ca(2+) binding. The N-linked (GlcNAc...) asparagine glycan is linked to asparagine 214. Aspartate 245, threonine 248, and aspartate 253 together coordinate Ca(2+).

Belongs to the peroxidase family. Classical plant (class III) peroxidase subfamily. Requires heme b as cofactor. The cofactor is Ca(2+).

The protein resides in the secreted. It carries out the reaction 2 a phenolic donor + H2O2 = 2 a phenolic radical donor + 2 H2O. In terms of biological role, removal of H(2)O(2), oxidation of toxic reductants, biosynthesis and degradation of lignin, suberization, auxin catabolism, response to environmental stresses such as wounding, pathogen attack and oxidative stress. These functions might be dependent on each isozyme/isoform in each plant tissue. This Arabidopsis thaliana (Mouse-ear cress) protein is Peroxidase 68 (PER68).